A 232-amino-acid chain; its full sequence is Ubiquinone biosynthesis O-methyltransferase (232 aa).

S-adenosyl-L-methionine-binding residues include Arg-36, Gly-55, Asp-76, and Met-120.

It belongs to the methyltransferase superfamily. UbiG/COQ3 family.

The catalysed reaction is a 3-demethylubiquinol + S-adenosyl-L-methionine = a ubiquinol + S-adenosyl-L-homocysteine + H(+). The enzyme catalyses a 3-(all-trans-polyprenyl)benzene-1,2-diol + S-adenosyl-L-methionine = a 2-methoxy-6-(all-trans-polyprenyl)phenol + S-adenosyl-L-homocysteine + H(+). The protein operates within cofactor biosynthesis; ubiquinone biosynthesis. O-methyltransferase that catalyzes the 2 O-methylation steps in the ubiquinone biosynthetic pathway. This is Ubiquinone biosynthesis O-methyltransferase from Paraburkholderia phytofirmans (strain DSM 17436 / LMG 22146 / PsJN) (Burkholderia phytofirmans).